Here is a 412-residue protein sequence, read N- to C-terminus: MQMITLAQQAKIASVELAQFENVQKNQALLTIAQQLEQRSAEILAANAKDIEFAKNQGISTAIIDRLLLNESRLQGIANDVRNVAKLADPVGQVIDGGVLNSGLKIERQRVPLGVILTIYEARPNVTIDVASLCLKTGNAVILRGGKETKFTNAVLVEVVQQALETAGLPKLAVQAVTDPDRVLLLELLKLDRYIDMVIPRGGAGLHQFCKENSTIPVIVGGIGVCHMFVEKSADQQKTLELIANAKTQRPSTCNTLETLLVEKAIAVEFLPKLANRMKALGVTLHTDDLQKTEGIEPLDEARMRQEWLSLDLNVVVIDNLTKAVEHIREYGSQHSEAILTSDYQLARQFVAQVDAAAVYINASTRFTDGGEFGLGAEVAVSTQKLHARGPMGLEALTTYKWVCEGDYLVRK.

It belongs to the gamma-glutamyl phosphate reductase family.

The protein localises to the cytoplasm. The catalysed reaction is L-glutamate 5-semialdehyde + phosphate + NADP(+) = L-glutamyl 5-phosphate + NADPH + H(+). It participates in amino-acid biosynthesis; L-proline biosynthesis; L-glutamate 5-semialdehyde from L-glutamate: step 2/2. Catalyzes the NADPH-dependent reduction of L-glutamate 5-phosphate into L-glutamate 5-semialdehyde and phosphate. The product spontaneously undergoes cyclization to form 1-pyrroline-5-carboxylate. This chain is Gamma-glutamyl phosphate reductase, found in Actinobacillus pleuropneumoniae serotype 3 (strain JL03).